The primary structure comprises 447 residues: MNQNHTILQNLPVGQKVGIAFSGGLDTSAALLWMKLKGALPYAYTANLGQPDEDDYNAIPKKAMEYGAENARLIDCRAQLAHEGIAAIQCGAFHVSTGGIAYFNTTPLGRAVTGTMLVSAMKEDDVNIWGDGSTYKGNDIERFYRYGLLTNPALKIYKPWLDQQFIDELGGRHEMSEFLIANGFNYKMSVEKAYSTDSNMLGATHEAKDLEFLNSGIKIVKPIMGIAFWDENVEIKPEEVSVRFEEGVPVALNGKEYADPVELFLEANRIGGRHGLGMSDQIENRIIEAKSRGIYEAPGMALFHIAYERLVTGIHNEDTIEQYRINGLRLGRLLYQGRWFDSQALMLRETAQRWVAKAITGEVTLELRRGNDYSILNTESPNLTYQPERLSMEKVEDAAFTPLDRIGQLTMRNLDITDTRAKLGIYSQSGLLALGEGSVLPQLGNKQ.

ATP is bound by residues 20-28 (AFSGGLDTS) and A46. Residue Y102 coordinates L-citrulline. ATP contacts are provided by G132 and T134. L-aspartate-binding residues include T134, N138, and D139. N138 contributes to the L-citrulline binding site. D139 is an ATP binding site. L-citrulline-binding residues include R142 and S195. D197 contributes to the ATP binding site. L-citrulline-binding residues include T204, E206, and E283.

The protein belongs to the argininosuccinate synthase family. Type 2 subfamily. In terms of assembly, homotetramer.

The protein localises to the cytoplasm. It carries out the reaction L-citrulline + L-aspartate + ATP = 2-(N(omega)-L-arginino)succinate + AMP + diphosphate + H(+). Its pathway is amino-acid biosynthesis; L-arginine biosynthesis; L-arginine from L-ornithine and carbamoyl phosphate: step 2/3. The protein is Argininosuccinate synthase (argG) of Neisseria meningitidis serogroup A / serotype 4A (strain DSM 15465 / Z2491).